Here is a 417-residue protein sequence, read N- to C-terminus: UDP-N-acetylglucosamine 1-carboxyvinyltransferase 2 (417 aa).

Residue 22–23 (KN) participates in phosphoenolpyruvate binding. R94 contributes to the UDP-N-acetyl-alpha-D-glucosamine binding site. C118 functions as the Proton donor in the catalytic mechanism. Position 118 is a 2-(S-cysteinyl)pyruvic acid O-phosphothioketal (C118). Residues 123 to 127 (RPIDL), D306, and I328 each bind UDP-N-acetyl-alpha-D-glucosamine.

Belongs to the EPSP synthase family. MurA subfamily.

The protein localises to the cytoplasm. It carries out the reaction phosphoenolpyruvate + UDP-N-acetyl-alpha-D-glucosamine = UDP-N-acetyl-3-O-(1-carboxyvinyl)-alpha-D-glucosamine + phosphate. Its pathway is cell wall biogenesis; peptidoglycan biosynthesis. In terms of biological role, cell wall formation. Adds enolpyruvyl to UDP-N-acetylglucosamine. In Clostridium tetani (strain Massachusetts / E88), this protein is UDP-N-acetylglucosamine 1-carboxyvinyltransferase 2.